Consider the following 1313-residue polypeptide: MIFTILNVLTRAMLVMSMYSLTTWDSTSRNDMCFSNDSPLEGLVYYWETHSKRHDYKKQESQRCRVGDSDKKMITNVTIISLISEIQKSISELSLSCVNDDNSTGQVLTFNGLEDTIRGDYIVDCVTGLYQSDIGVGVGLGRTHHGHQQMKNKAVVIDEKERMISLLETQQSENDIKMQVLMSEIEQLKNQLSKKRNERGQEKRDAEKVMSDLMARNSDLRKHNDILTAEISQMKNKNTIQRNKNTVSTTVVPAILSVALLSSSVAPIIAAPPDSPMINPWPHAKNRVGTGMYKYDENDDSGCRPIRYGVSCIGFDFMLKMDKYPFFNAFIGHKTPLESFADKIIEKEEETCEIGTNKEFKCFEERAYIKGTCPTNINAVHYIDNKGKLRYVKCKENLEMTEDCAFCRKIKKKAGQSVQVQKTSVPLQDAICQENSDTYSGPKIPFKGVCKIGLIKYKECKFKTSSYETVSFITLKEKGKIYIEHLMLKNIEVVTNVSFVCYEHVGQDEQEVEHRALKRVSVNDCKIVDNSKQKICTGDHVFCEKYDCSTSYPDVTCIHAPGSGPLYINLMGSWIKPQCVGYERVLVDREVKQPLLAPEQNCDTCVSECLDEGVHIKSTGFEITSAVACSHGSCISAHQEPSTSVIVPYPGLLASVGGRIGIHLSHTSDSASVHMVVVCPPRDSCAAHNCLLCYHGILNYQCHSTLSAILTSFLLILFIYTVFSVTTNILYVLRLIPKQLKSPVGWLKLFINWLLTALRIKTRNVMRRINQRIGWVDHHDVERPRHREPMRRFKTTLLLTLIMMTGGNACSNTVVANSKQTRCVQEGSNTKCSITATITLRAGVIGAESCFIIKGPMENQQKTISIKTISSETVCREGSSFWTSLYIPSCLSSRRCHLVGDCVGNKCQSWRDDQLSREFSGVKDNHIMNENKCFEQCGAIGCGCFNINPSCLYVHAYLKSARNEAVRVFSCSDWVHRVSFEVKGPDGETELVTLGSPGTKFLNWGTLSLSLDAEGISGTNSISFLESSKGGFALYDEGYNEIPREGFLGEIRCSSESAAISAHKSCIRAPGLIKYKPMTDQIECTASLVDPFAIFLKGSLPQTRNGQTFTSTKDKKTVQAFTNGAIKALLSINLDDHEIVFINKVKNCDATFLNVSGCYSCDYGAHVCVKVKSSESADFFAESEDKTTVLSFPIQSGTHDYCQVLHFQKPLVDERLSYSCGSEPKLIVIKGTLVCMGVYDFRNKTGGSSTVVNPSEGAWSISNWFSGLLDWLGGPMKAILKILGFIAIGIVCFVLFMILIRIAVNSINIKKKN.

An N-terminal signal peptide occupies residues 1-17 (MIFTILNVLTRAMLVMS). Topologically, residues 18 to 712 (MYSLTTWDST…HSTLSAILTS (695 aa)) are lumenal. 2 N-linked (GlcNAc...) asparagine; by host glycosylation sites follow: Asn76 and Asn102. The stretch at 178-237 (MQVLMSEIEQLKNQLSKKRNERGQEKRDAEKVMSDLMARNSDLRKHNDILTAEISQMKNK) forms a coiled coil. Residues 250–270 (TVVPAILSVALLSSSVAPIIA) form an internal signal sequence for glycoprotein N region. Cystine bridges form between Cys303–Cys312, Cys352–Cys362, Cys373–Cys404, Cys394–Cys407, Cys432–Cys579, Cys450–Cys460, Cys501–Cys557, Cys525–Cys536, Cys543–Cys548, Cys602–Cys605, Cys609–Cys679, and Cys629–Cys634. An N-linked (GlcNAc...) asparagine; by host glycan is attached at Asn496. The helical transmembrane segment at 713 to 733 (FLLILFIYTVFSVTTNILYVL) threads the bilayer. The tract at residues 731–773 (YVLRLIPKQLKSPVGWLKLFINWLLTALRIKTRNVMRRINQRI) is golgi retention signal. Residues 734 to 791 (RLIPKQLKSPVGWLKLFINWLLTALRIKTRNVMRRINQRIGWVDHHDVERPRHREPMR) are Cytoplasmic-facing. Positions 769–773 (INQRI) are important for correct targeting of the glycoproteins to the Golgi complex but not for heterodimerization. An internal signal sequence for glycoprotein C region spans residues 793–809 (FKTTLLLTLIMMTGGNA). Disulfide bonds link Cys810–Cys850, Cys823–Cys832, Cys875–Cys971, Cys890–Cys1084, Cys896–Cys944, Cys902–Cys951, Cys907–Cys933, Cys937–Cys942, Cys1053–Cys1066, Cys1148–Cys1220, Cys1158–Cys1161, and Cys1168–Cys1202. The Lumenal portion of the chain corresponds to 810 to 1278 (CSNTVVANSK…LDWLGGPMKA (469 aa)). The fusion loop stretch occupies residues 896–902 (CHLVGDC). The interval 938-949 (GAIGCGCFNINP) is fusion loop. Residue Asn1154 is glycosylated (N-linked (GlcNAc...) asparagine; by host). A glycan (N-linked (GlcNAc...) asparagine; by host) is linked at Asn1243. The helical transmembrane segment at 1279-1299 (ILKILGFIAIGIVCFVLFMIL) threads the bilayer. At 1300 to 1313 (IRIAVNSINIKKKN) the chain is on the cytoplasmic side.

It belongs to the phlebovirus envelope glycoprotein family. As to quaternary structure, heterodimer with glycoprotein C. Interacts with nucleocapsid protein N and with the polymerase L in order to package them into virus particles. Heterodimer with glycoprotein C. Homotrimer (postfusion). Interacts with nucleocapsid protein N and with the polymerase L in order to package them into virus particles. Interacts with host E3 ubiquitin-protein ligase UBR4; this interaction is important for viral RNA production. Post-translationally, specific enzymatic cleavages in vivo yield mature proteins including NSm protein, Glycoprotein C, and Glycoprotein N. Glycosylated. The glycans can attach to host CD209/DC-SIGN, and may play a role in virus entry into dendritic cells. In terms of processing, palmitoylated.

It localises to the virion membrane. It is found in the host Golgi apparatus membrane. The protein localises to the host endoplasmic reticulum membrane. Its function is as follows. Structural component of the virion that interacts with glycoprotein C. It shields the hydrophobic fusion loops of the glycoprotein C, preventing premature fusion. The glycoprotein protrusions are arranged on an icosahedral lattice, with T=12 triangulation. They are able to attach the virion to the host cell receptor CD209/DC-SIGN and to promote fusion of membranes with the late endosome after endocytosis of the virion. Plays a role in the packaging of ribonucleoproteins and polymerase during virus assembly. Functionally, structural component of the virion that interacts with glycoprotein N. Acts as a class II fusion protein that is activated upon acidification and subsequent repositioning of the glycoprotein N. The glycoprotein protrusions are arranged on an icosahedral lattice, with T=12 triangulation. They are able to attach the virion to the host cell receptor CD209/DC-SIGN and to promote fusion of membranes with the late endosome after endocytosis of the virion. In terms of biological role, plays a role for virus dissemination in mosquitoes. This chain is Envelopment polyprotein (GP), found in Homo sapiens (Human).